Reading from the N-terminus, the 86-residue chain is Toxin Cn1 (86 aa).

The N-terminal stretch at 1-19 (MNSLLMITACFVLIGTVWA) is a signal peptide. Residues 20–84 (KDGYLVDAKG…TWPLPNKTCS (65 aa)) form the LCN-type CS-alpha/beta domain. Disulfide bonds link cysteine 30–cysteine 83, cysteine 34–cysteine 59, cysteine 43–cysteine 64, and cysteine 47–cysteine 66. Serine 84 bears the Serine amide mark.

This sequence belongs to the long (4 C-C) scorpion toxin superfamily. Sodium channel inhibitor family. Beta subfamily. As to expression, expressed by the venom gland.

It is found in the secreted. In terms of biological role, beta toxins bind voltage-independently at site-4 of sodium channels (Nav) and shift the voltage of activation toward more negative potentials thereby affecting sodium channel activation and promoting spontaneous and repetitive firing. The sequence is that of Toxin Cn1 from Centruroides noxius (Mexican scorpion).